A 305-amino-acid chain; its full sequence is Ribonucleoside-diphosphate reductase small subunit (305 aa).

E64, E94, and H97 together coordinate Fe cation. Y101 is an active-site residue. A helical membrane pass occupies residues 150 to 170 (ILLFLLVEGIFFISSFFSIGL). 3 residues coordinate Fe cation: E157, E191, and H194.

It belongs to the ribonucleoside diphosphate reductase small chain family. Heterotetramer composed of a homodimer of the large subunit (R1) and a homodimer of the small subunit (R2). Larger multisubunit protein complex are also active, composed of (R1)n(R2)n. Fe cation is required as a cofactor.

It localises to the host membrane. It carries out the reaction a 2'-deoxyribonucleoside 5'-diphosphate + [thioredoxin]-disulfide + H2O = a ribonucleoside 5'-diphosphate + [thioredoxin]-dithiol. Its function is as follows. Ribonucleoside-diphosphate reductase holoenzyme provides the precursors necessary for viral DNA synthesis. Allows virus growth in non-dividing cells, as well as reactivation from latency in infected hosts. Catalyzes the biosynthesis of deoxyribonucleotides from the corresponding ribonucleotides. In Saimiri sciureus (Common squirrel monkey), this protein is Ribonucleoside-diphosphate reductase small subunit.